The sequence spans 405 residues: 3-isopropylmalate dehydrogenase (405 aa).

Glycine 86–glutamate 104 contacts NAD(+). The substrate site is built by arginine 111, arginine 121, arginine 148, and aspartate 237. Mg(2+) is bound by residues aspartate 237, aspartate 262, and aspartate 266. Glycine 301–asparagine 312 is a binding site for NAD(+). Residues alanine 352 to serine 371 form a disordered region.

This sequence belongs to the isocitrate and isopropylmalate dehydrogenases family. In terms of assembly, homodimer. Mg(2+) is required as a cofactor. Requires Mn(2+) as cofactor.

The protein localises to the cytoplasm. It catalyses the reaction (2R,3S)-3-isopropylmalate + NAD(+) = 4-methyl-2-oxopentanoate + CO2 + NADH. It participates in amino-acid biosynthesis; L-leucine biosynthesis; L-leucine from 3-methyl-2-oxobutanoate: step 3/4. Its function is as follows. Catalyzes the oxidation of 3-carboxy-2-hydroxy-4-methylpentanoate (3-isopropylmalate) to 3-carboxy-4-methyl-2-oxopentanoate. The product decarboxylates to 4-methyl-2 oxopentanoate. This chain is 3-isopropylmalate dehydrogenase (LEU2), found in Yarrowia lipolytica (strain CLIB 122 / E 150) (Yeast).